The chain runs to 332 residues: MIDPRLPLTDIHRHLDGNIRAQTILDLGRQFNLSLPADELEALRPHVQITKTEPDLVSFLQKLDWGVAVLGSLEACRRVAYENVEDAANAGLHYAELRFSPFYMAMKHQLPVAGVVEAVIDGIQSGCRDFDIDIRLIGILSRTFGEQACLQELDGLLAHRDAITALDLAGDELGFPGGLFRSHFNRARDAGWRITVHAGEAAGPESIWQAIRELGAERIGHGVKAVEDIKLMDYLAEHNIGIESCLTSNIQTSTVASLAAHPLATFLRHGVLASINTDDPAVQGIEIANEYHIAAPAAGLTPQEIRQAQENGLTMAFISEQEKQVLRDKIRN.

The Zn(2+) site is built by His12 and His14. His14, Asp16, and Gly170 together coordinate substrate. His197 is a Zn(2+) binding site. Glu200 serves as the catalytic Proton donor. Asp278 lines the Zn(2+) pocket. Asp279 provides a ligand contact to substrate.

Belongs to the metallo-dependent hydrolases superfamily. Adenosine and AMP deaminases family. Adenosine deaminase subfamily. Requires Zn(2+) as cofactor.

The enzyme catalyses adenosine + H2O + H(+) = inosine + NH4(+). It catalyses the reaction 2'-deoxyadenosine + H2O + H(+) = 2'-deoxyinosine + NH4(+). Catalyzes the hydrolytic deamination of adenosine and 2-deoxyadenosine. This Yersinia enterocolitica serotype O:8 / biotype 1B (strain NCTC 13174 / 8081) protein is Adenosine deaminase.